We begin with the raw amino-acid sequence, 668 residues long: Fructose-1,6-bisphosphatase class 3 (668 aa).

Belongs to the FBPase class 3 family. Mn(2+) is required as a cofactor.

The enzyme catalyses beta-D-fructose 1,6-bisphosphate + H2O = beta-D-fructose 6-phosphate + phosphate. Its pathway is carbohydrate biosynthesis; gluconeogenesis. This is Fructose-1,6-bisphosphatase class 3 from Clostridium botulinum (strain ATCC 19397 / Type A).